Here is a 265-residue protein sequence, read N- to C-terminus: Gamma-secretase subunit APH-1A (265 aa).

The Lumenal portion of the chain corresponds to 1–2 (MG). The helical transmembrane segment at 3 to 23 (AAVFFGCTFVAFGPAFSLFLI) threads the bilayer. At 24–31 (TVAGDPLR) the chain is on the cytoplasmic side. Residues 32–52 (VIILVAGAFFWLVSLLLASVV) form a helical membrane-spanning segment. Topologically, residues 53–68 (WFILVHVTDRSDARLQ) are lumenal. A helical membrane pass occupies residues 69–89 (YGLLIFGAAVSVLLQEVFRFA). The Cytoplasmic segment spans residues 90–118 (YYKLLKKADEGLASLSEDGRSPISIRQMA). A helical transmembrane segment spans residues 119–139 (YVSGLSFGIISGVFSVINILA). Residues 140 to 158 (DALGPGVVGIHGDSPYYFL) lie on the Lumenal side of the membrane. Residues 159–179 (TSAFLTAAIILLHTFWGVVFF) traverse the membrane as a helical segment. Topologically, residues 180 to 186 (DACERRR) are cytoplasmic. Residues 187-207 (YWALGLVVGSHLLTSGLTFLN) traverse the membrane as a helical segment. At 208–213 (PWYEAS) the chain is on the lumenal side. The helical transmembrane segment at 214 to 234 (LLPIYAVTVSMGLWAFITAGG) threads the bilayer. Over 235 to 265 (SLRSIQRSLSCRRQEDSRVMVYSALRIPPED) the chain is Cytoplasmic.

Belongs to the APH-1 family. The functional gamma-secretase complex is composed of at least four polypeptides: a presenilin homodimer (PSEN1 or PSEN2), nicastrin (NCSTN), APH1 (APH1A or APH1B) and PSENEN/PEN2.

Its subcellular location is the endoplasmic reticulum membrane. It is found in the golgi apparatus. The protein resides in the golgi stack membrane. Non-catalytic subunit of the gamma-secretase complex, an endoprotease complex that catalyzes the intramembrane cleavage of integral membrane proteins such as Notch receptors and APP (amyloid-beta precursor protein). Required for normal gamma-secretase assembly. The gamma-secretase complex plays a role in Notch and Wnt signaling cascades and regulation of downstream processes via its role in processing key regulatory proteins, and by regulating cytosolic CTNNB1 levels. The chain is Gamma-secretase subunit APH-1A (Aph1a) from Mus musculus (Mouse).